The following is a 169-amino-acid chain: Peptide deformylase (169 aa).

Residues cysteine 91 and histidine 133 each contribute to the Fe cation site. Glutamate 134 is an active-site residue. Histidine 137 is a binding site for Fe cation.

It belongs to the polypeptide deformylase family. The cofactor is Fe(2+).

It carries out the reaction N-terminal N-formyl-L-methionyl-[peptide] + H2O = N-terminal L-methionyl-[peptide] + formate. Removes the formyl group from the N-terminal Met of newly synthesized proteins. Requires at least a dipeptide for an efficient rate of reaction. N-terminal L-methionine is a prerequisite for activity but the enzyme has broad specificity at other positions. In Haemophilus influenzae (strain 86-028NP), this protein is Peptide deformylase.